The primary structure comprises 281 residues: Insulin-like growth factor-binding protein 7 (281 aa).

Positions 1–25 are cleaved as a signal peptide; that stretch reads MERPPRALLLGAAGLLLLLLPLSSS. One can recognise an IGFBP N-terminal domain in the interval 27-113; it reads SSDACGPCVP…PATLAVCVCK (87 aa). 8 disulfides stabilise this stretch: Cys-31–Cys-56, Cys-34–Cys-58, Cys-39–Cys-59, Cys-47–Cys-62, Cys-70–Cys-86, Cys-80–Cys-110, Cys-112–Cys-130, and Cys-119–Cys-155. A Kazal-like domain is found at 98–157; sequence GAAAGGPATLAVCVCKSRYPVCGSNGITYPSGCQLRAASLRAESRGEKAITQVSKGTCEQ. The Ig-like C2-type domain occupies 159 to 263; that stretch reads PSIVTPPKDI…GQASAAAKIT (105 aa). An N-linked (GlcNAc...) asparagine glycan is attached at Asn-170. Cys-180 and Cys-247 are disulfide-bonded. Phosphoserine is present on Ser-238.

In terms of assembly, may interact with VPS24/CHMP3; the relevance of such interaction however remains unclear. Interacts with CD93; this interaction plays a role in endothelial cells angiogenesis. In terms of processing, N-glycosylated. Expressed at high levels in lung, kidney, small intestine, testis and uterus and at moderate levels in liver.

It is found in the secreted. Its function is as follows. Binds IGF1 and IGF2 with a relatively low affinity. Stimulates prostacyclin (PGI2) production. Stimulates cell adhesion. Acts as a ligand for CD93 to play a role in angiogenesis. This is Insulin-like growth factor-binding protein 7 (Igfbp7) from Mus musculus (Mouse).